The following is a 358-amino-acid chain: Transmembrane protein 144 homolog B (358 aa).

Helical transmembrane passes span Val-6 to Val-26, Leu-35 to Ile-55, Ile-60 to Val-79, Ile-86 to Lys-108, Pro-122 to Ile-142, Ile-211 to Met-231, Leu-244 to Val-264, Ile-279 to Ala-299, Ile-307 to Tyr-327, and Leu-337 to Ser-357.

The protein belongs to the TMEM144 family.

It localises to the membrane. This is Transmembrane protein 144 homolog B (tmem144B) from Dictyostelium discoideum (Social amoeba).